The following is a 415-amino-acid chain: Serine hydroxymethyltransferase (415 aa).

Residues leucine 122 and 126–128 (GHL) each bind (6S)-5,6,7,8-tetrahydrofolate. Lysine 230 bears the N6-(pyridoxal phosphate)lysine mark.

Belongs to the SHMT family. In terms of assembly, homodimer. Pyridoxal 5'-phosphate is required as a cofactor.

It localises to the cytoplasm. It catalyses the reaction (6R)-5,10-methylene-5,6,7,8-tetrahydrofolate + glycine + H2O = (6S)-5,6,7,8-tetrahydrofolate + L-serine. It participates in one-carbon metabolism; tetrahydrofolate interconversion. The protein operates within amino-acid biosynthesis; glycine biosynthesis; glycine from L-serine: step 1/1. Catalyzes the reversible interconversion of serine and glycine with tetrahydrofolate (THF) serving as the one-carbon carrier. This reaction serves as the major source of one-carbon groups required for the biosynthesis of purines, thymidylate, methionine, and other important biomolecules. Also exhibits THF-independent aldolase activity toward beta-hydroxyamino acids, producing glycine and aldehydes, via a retro-aldol mechanism. The chain is Serine hydroxymethyltransferase from Leptothrix cholodnii (strain ATCC 51168 / LMG 8142 / SP-6) (Leptothrix discophora (strain SP-6)).